The following is a 772-amino-acid chain: Lon protease (772 aa).

Positions 6–200 (YPTLPLKNTV…LMHRYLNHEV (195 aa)) constitute a Lon N-terminal domain. 352–359 (GPPGVGKT) contacts ATP. The Lon proteolytic domain occupies 588–769 (QLAPGVAAGL…EEVLAEAIPD (182 aa)). Catalysis depends on residues serine 675 and lysine 718.

Belongs to the peptidase S16 family. In terms of assembly, homohexamer. Organized in a ring with a central cavity.

The protein localises to the cytoplasm. The catalysed reaction is Hydrolysis of proteins in presence of ATP.. Its function is as follows. ATP-dependent serine protease that mediates the selective degradation of mutant and abnormal proteins as well as certain short-lived regulatory proteins. Required for cellular homeostasis and for survival from DNA damage and developmental changes induced by stress. Degrades polypeptides processively to yield small peptide fragments that are 5 to 10 amino acids long. Binds to DNA in a double-stranded, site-specific manner. This chain is Lon protease, found in Nitrosococcus oceani (strain ATCC 19707 / BCRC 17464 / JCM 30415 / NCIMB 11848 / C-107).